A 108-amino-acid polypeptide reads, in one-letter code: Thiosulfate sulfurtransferase GlpE (108 aa).

In terms of domain architecture, Rhodanese spans 18–106; it reads ENEGATLADI…WERSGLPIET (89 aa). Cysteine 66 acts as the Cysteine persulfide intermediate in catalysis.

The protein belongs to the GlpE family.

The protein localises to the cytoplasm. It carries out the reaction thiosulfate + hydrogen cyanide = thiocyanate + sulfite + 2 H(+). It catalyses the reaction thiosulfate + [thioredoxin]-dithiol = [thioredoxin]-disulfide + hydrogen sulfide + sulfite + 2 H(+). Transferase that catalyzes the transfer of sulfur from thiosulfate to thiophilic acceptors such as cyanide or dithiols. May function in a CysM-independent thiosulfate assimilation pathway by catalyzing the conversion of thiosulfate to sulfite, which can then be used for L-cysteine biosynthesis. The polypeptide is Thiosulfate sulfurtransferase GlpE (Actinobacillus pleuropneumoniae serotype 7 (strain AP76)).